The following is a 441-amino-acid chain: Chromosome partition protein MukF (441 aa).

The leucine-zipper stretch occupies residues 208-236 (LDETSGNLRELQDTLNAAGDKLQAQLLRI).

It belongs to the MukF family. In terms of assembly, interacts, and probably forms a ternary complex, with MukE and MukB via its C-terminal region. The complex formation is stimulated by calcium or magnesium. It is required for an interaction between MukE and MukB.

The protein resides in the cytoplasm. The protein localises to the nucleoid. In terms of biological role, involved in chromosome condensation, segregation and cell cycle progression. May participate in facilitating chromosome segregation by condensation DNA from both sides of a centrally located replisome during cell division. Not required for mini-F plasmid partitioning. Probably acts via its interaction with MukB and MukE. Overexpression results in anucleate cells. It has a calcium binding activity. The protein is Chromosome partition protein MukF of Pasteurella multocida (strain Pm70).